A 390-amino-acid polypeptide reads, in one-letter code: Acetylornithine aminotransferase (390 aa).

Residues 103-104 (GT) and Phe-129 each bind pyridoxal 5'-phosphate. Arg-132 provides a ligand contact to N(2)-acetyl-L-ornithine. 214-217 (DEVQ) is a pyridoxal 5'-phosphate binding site. At Lys-243 the chain carries N6-(pyridoxal phosphate)lysine. Ser-271 is a N(2)-acetyl-L-ornithine binding site. Pyridoxal 5'-phosphate is bound at residue Thr-272. Lys-304 participates in a covalent cross-link: Isoglutamyl lysine isopeptide (Lys-Gln) (interchain with Q-Cter in protein Pup).

The protein belongs to the class-III pyridoxal-phosphate-dependent aminotransferase family. ArgD subfamily. In terms of assembly, homodimer. Requires pyridoxal 5'-phosphate as cofactor.

The protein localises to the cytoplasm. It catalyses the reaction N(2)-acetyl-L-ornithine + 2-oxoglutarate = N-acetyl-L-glutamate 5-semialdehyde + L-glutamate. It participates in amino-acid biosynthesis; L-arginine biosynthesis; N(2)-acetyl-L-ornithine from L-glutamate: step 4/4. The polypeptide is Acetylornithine aminotransferase (Mycolicibacterium smegmatis (strain ATCC 700084 / mc(2)155) (Mycobacterium smegmatis)).